The primary structure comprises 227 residues: MTAIAPVITIDGPSGAGKGTLCKAMAEALQWHLLDSGAIYRVLALAALHHHVDLASEDALVPLASHLDVRFVSTDGNLEVILEGEDVSGEIRTQEVANAASQVAAFPRVREALLRRQRAFREAPGLIADGRDMGTVVFPDAPVKIFLDASSEERAHRRMLQLQENGFSVNFERLLAEIKERDDRDRNRAVAPLVPAADALVLDSTRLSIEQVIEKALQYARQKLALA.

Position 12 to 20 (12 to 20) interacts with ATP; that stretch reads GPSGAGKGT.

This sequence belongs to the cytidylate kinase family. Type 1 subfamily.

It is found in the cytoplasm. It carries out the reaction CMP + ATP = CDP + ADP. The catalysed reaction is dCMP + ATP = dCDP + ADP. The protein is Cytidylate kinase of Salmonella paratyphi B (strain ATCC BAA-1250 / SPB7).